The following is a 267-amino-acid chain: tRNA pseudouridine synthase A (267 aa).

Catalysis depends on D51, which acts as the Nucleophile. Y109 provides a ligand contact to substrate.

The protein belongs to the tRNA pseudouridine synthase TruA family. In terms of assembly, homodimer.

It carries out the reaction uridine(38/39/40) in tRNA = pseudouridine(38/39/40) in tRNA. Functionally, formation of pseudouridine at positions 38, 39 and 40 in the anticodon stem and loop of transfer RNAs. This Staphylococcus aureus (strain bovine RF122 / ET3-1) protein is tRNA pseudouridine synthase A.